An 83-amino-acid polypeptide reads, in one-letter code: Small ribosomal subunit protein eS21 (83 aa).

Residue Met-1 is modified to N-acetylmethionine. Lys-41 participates in a covalent cross-link: Glycyl lysine isopeptide (Lys-Gly) (interchain with G-Cter in SUMO2).

It belongs to the eukaryotic ribosomal protein eS21 family. As to quaternary structure, component of the 40S small ribosomal subunit.

It localises to the cytoplasm. The protein localises to the cytosol. Its subcellular location is the rough endoplasmic reticulum. Component of the small ribosomal subunit. The ribosome is a large ribonucleoprotein complex responsible for the synthesis of proteins in the cell. The protein is Small ribosomal subunit protein eS21 (RPS21) of Oryctolagus cuniculus (Rabbit).